Consider the following 111-residue polypeptide: Nucleoid-associated protein Fphi_0115 (111 aa).

The segment at 1–27 is disordered; the sequence is MNFDMSKLMQQAQKMQEQMKKAQQERE. Residues 17–27 show a composition bias toward basic and acidic residues; that stretch reads EQMKKAQQERE.

The protein belongs to the YbaB/EbfC family. In terms of assembly, homodimer.

The protein localises to the cytoplasm. The protein resides in the nucleoid. Binds to DNA and alters its conformation. May be involved in regulation of gene expression, nucleoid organization and DNA protection. The polypeptide is Nucleoid-associated protein Fphi_0115 (Francisella philomiragia subsp. philomiragia (strain ATCC 25017 / CCUG 19701 / FSC 153 / O#319-036)).